The chain runs to 488 residues: Inosine-5'-monophosphate dehydrogenase (488 aa).

CBS domains follow at residues 95 to 153 and 157 to 216; these read VISN…SIKI and MTKD…AKDE. NAD(+) contacts are provided by residues Asp250 and 300 to 302; that span reads GIG. K(+) contacts are provided by Gly302 and Gly304. Ser305 contributes to the IMP binding site. Residue Cys307 coordinates K(+). Cys307 acts as the Thioimidate intermediate in catalysis. IMP is bound by residues 340 to 342, 363 to 364, and 387 to 391; these read DGG, GS, and YRGMG. The Proton acceptor role is filled by Arg403. IMP is bound at residue Glu417. The interval 467-488 is disordered; the sequence is AGLAESHPHNVQITKESPNYSF. Residues Glu471, Ser472, and His473 each contribute to the K(+) site. The span at 475–488 shows a compositional bias: polar residues; the sequence is HNVQITKESPNYSF.

The protein belongs to the IMPDH/GMPR family. As to quaternary structure, homotetramer. Requires K(+) as cofactor.

It carries out the reaction IMP + NAD(+) + H2O = XMP + NADH + H(+). Its pathway is purine metabolism; XMP biosynthesis via de novo pathway; XMP from IMP: step 1/1. Mycophenolic acid (MPA) is a non-competitive inhibitor that prevents formation of the closed enzyme conformation by binding to the same site as the amobile flap. In contrast, mizoribine monophosphate (MZP) is a competitive inhibitor that induces the closed conformation. MPA is a potent inhibitor of mammalian IMPDHs but a poor inhibitor of the bacterial enzymes. MZP is a more potent inhibitor of bacterial IMPDH. Functionally, catalyzes the conversion of inosine 5'-phosphate (IMP) to xanthosine 5'-phosphate (XMP), the first committed and rate-limiting step in the de novo synthesis of guanine nucleotides, and therefore plays an important role in the regulation of cell growth. The sequence is that of Inosine-5'-monophosphate dehydrogenase from Staphylococcus epidermidis (strain ATCC 35984 / DSM 28319 / BCRC 17069 / CCUG 31568 / BM 3577 / RP62A).